Here is a 347-residue protein sequence, read N- to C-terminus: NADH-ubiquinone oxidoreductase chain 2 (347 aa).

11 helical membrane passes run 1-21 (MNPIVFSTILTTAIMGTMIVM), 25-45 (HWLMIWIGFEMNLLAIIPILM), 60-80 (FLTQATASMLLMMAIIINLMF), 89-109 (IFNPTASIIMTSALIMKLGLS), 111-131 (FHFWVPEVTQGIPLVSGLILL), 149-169 (INLDMLMTSALLSILVGGWGG), 178-198 (IMAYSSIAHMGWMTAILTYNP), 201-221 (TALNMLIYIMMTLTTFMLFML), 242-262 (SLILITMLSLGGLPPLSGFIP), 274-294 (DSIILPTSMAIMALLNLYFYM), and 323-343 (MNFLPTLIIMSTLLLPLTPIM).

The protein belongs to the complex I subunit 2 family. In terms of assembly, core subunit of respiratory chain NADH dehydrogenase (Complex I) which is composed of 45 different subunits. Interacts with TMEM242.

It localises to the mitochondrion inner membrane. The catalysed reaction is a ubiquinone + NADH + 5 H(+)(in) = a ubiquinol + NAD(+) + 4 H(+)(out). In terms of biological role, core subunit of the mitochondrial membrane respiratory chain NADH dehydrogenase (Complex I) which catalyzes electron transfer from NADH through the respiratory chain, using ubiquinone as an electron acceptor. Essential for the catalytic activity and assembly of complex I. This is NADH-ubiquinone oxidoreductase chain 2 from Ceratotherium simum (White rhinoceros).